The chain runs to 333 residues: tRNA N6-adenosine threonylcarbamoyltransferase (333 aa).

Fe cation contacts are provided by His-111 and His-115. Substrate is bound by residues 134-138 (LVSGG), Asp-167, Gly-180, and Asn-272. Asp-300 serves as a coordination point for Fe cation.

Belongs to the KAE1 / TsaD family. The cofactor is Fe(2+).

Its subcellular location is the cytoplasm. It catalyses the reaction L-threonylcarbamoyladenylate + adenosine(37) in tRNA = N(6)-L-threonylcarbamoyladenosine(37) in tRNA + AMP + H(+). Required for the formation of a threonylcarbamoyl group on adenosine at position 37 (t(6)A37) in tRNAs that read codons beginning with adenine. Is involved in the transfer of the threonylcarbamoyl moiety of threonylcarbamoyl-AMP (TC-AMP) to the N6 group of A37, together with TsaE and TsaB. TsaD likely plays a direct catalytic role in this reaction. The protein is tRNA N6-adenosine threonylcarbamoyltransferase of Hamiltonella defensa subsp. Acyrthosiphon pisum (strain 5AT).